The primary structure comprises 693 residues: Elongation factor G (693 aa).

The region spanning 9–283 (ERVRNIGIIA…AVCDYLPSPL (275 aa)) is the tr-type G domain. GTP contacts are provided by residues 18–25 (AHIDAGKT), 82–86 (DTPGH), and 136–139 (NKMD).

The protein belongs to the TRAFAC class translation factor GTPase superfamily. Classic translation factor GTPase family. EF-G/EF-2 subfamily.

It localises to the cytoplasm. In terms of biological role, catalyzes the GTP-dependent ribosomal translocation step during translation elongation. During this step, the ribosome changes from the pre-translocational (PRE) to the post-translocational (POST) state as the newly formed A-site-bound peptidyl-tRNA and P-site-bound deacylated tRNA move to the P and E sites, respectively. Catalyzes the coordinated movement of the two tRNA molecules, the mRNA and conformational changes in the ribosome. In Dehalococcoides mccartyi (strain ATCC BAA-2100 / JCM 16839 / KCTC 5957 / BAV1), this protein is Elongation factor G.